Reading from the N-terminus, the 371-residue chain is Queuine tRNA-ribosyltransferase (371 aa).

Asp-93 functions as the Proton acceptor in the catalytic mechanism. Residues 93–97, Asp-147, Gln-191, and Gly-218 each bind substrate; that span reads DSGGF. The interval 249–255 is RNA binding; sequence GVGTPLD. The active-site Nucleophile is the Asp-268. The interval 273–277 is RNA binding; important for wobble base 34 recognition; sequence TRNAR. Zn(2+)-binding residues include Cys-306, Cys-308, Cys-311, and His-337.

Belongs to the queuine tRNA-ribosyltransferase family. Homodimer. Within each dimer, one monomer is responsible for RNA recognition and catalysis, while the other monomer binds to the replacement base PreQ1. Zn(2+) is required as a cofactor.

The enzyme catalyses 7-aminomethyl-7-carbaguanine + guanosine(34) in tRNA = 7-aminomethyl-7-carbaguanosine(34) in tRNA + guanine. It participates in tRNA modification; tRNA-queuosine biosynthesis. Functionally, catalyzes the base-exchange of a guanine (G) residue with the queuine precursor 7-aminomethyl-7-deazaguanine (PreQ1) at position 34 (anticodon wobble position) in tRNAs with GU(N) anticodons (tRNA-Asp, -Asn, -His and -Tyr). Catalysis occurs through a double-displacement mechanism. The nucleophile active site attacks the C1' of nucleotide 34 to detach the guanine base from the RNA, forming a covalent enzyme-RNA intermediate. The proton acceptor active site deprotonates the incoming PreQ1, allowing a nucleophilic attack on the C1' of the ribose to form the product. After dissociation, two additional enzymatic reactions on the tRNA convert PreQ1 to queuine (Q), resulting in the hypermodified nucleoside queuosine (7-(((4,5-cis-dihydroxy-2-cyclopenten-1-yl)amino)methyl)-7-deazaguanosine). The protein is Queuine tRNA-ribosyltransferase of Lawsonia intracellularis (strain PHE/MN1-00).